Reading from the N-terminus, the 506-residue chain is tRNA (guanine(6)-N(2))-methyltransferase THUMP3 (506 aa).

Residues 144–172 (KTKRRKLNPNSSKQKIDNGRGDTTVEKDV) form a disordered region. Residues 157–172 (QKIDNGRGDTTVEKDV) show a composition bias toward basic and acidic residues. The THUMP domain maps to 170–286 (KDVKKELTNS…DNEVVVGIAL (117 aa)).

Belongs to the methyltransferase superfamily. As to quaternary structure, part of the heterodimeric THUMPD3-TRM112 methyltransferase complex; this complex forms an active tRNA methyltransferase, where TRMT112 acts as an activator of the catalytic subunit THUMPD3.

The protein resides in the cytoplasm. It catalyses the reaction guanosine(6) in tRNA + S-adenosyl-L-methionine = N(2)-methylguanosine(6) in tRNA + S-adenosyl-L-homocysteine + H(+). The catalysed reaction is guanosine(7) in tRNA + S-adenosyl-L-methionine = N(2)-methylguanosine(7) in tRNA + S-adenosyl-L-homocysteine + H(+). In terms of biological role, catalytic subunit of the THUMPD3-TRM112 methyltransferase complex, that specifically mediates the S-adenosyl-L-methionine-dependent N(2)-methylation of guanosine nucleotide at position 6 (m2G6) in tRNAs. This is one of the major tRNA (guanine-N(2))-methyltransferases. Also catalyzes the S-adenosyl-L-methionine-dependent N(2)-methylation of guanosine nucleotide at position 7 of tRNA(Trp). In Bos taurus (Bovine), this protein is tRNA (guanine(6)-N(2))-methyltransferase THUMP3.